Consider the following 732-residue polypeptide: MAEFSDPPPSNLSSSHKLTKPNQTLDESSPTAPIRDLVTNSLSLSSPIRQIQALSPAKPDGSSSSPPDKTLNFNPEENRDVNPDESSSSPSDKTLIAPPAQISPVSNNNHLRITNTSDSYLYRPPRRYIEYESDDDELNKMEPTKPLQLSWWYPRIEPTGVGAGLYNSGNTCFIASVLQCFTHTVPLIDSLRSFMYGNPCNCGNEKFCVMQALRDHIELALRSSGYGINIDRFRDNLTYFSSDFMINHQEDAHEFLQSFLDKLERCCLDPKNQLGSVSSQDLNIVDNVFGGGLMSTLCCCNCNSVSNTFEPSLGWSLEIEDVNTLWKALESFTCVEKLEDQLTCDNCKEKVTKEKQLRFDKLPPVATFHLKRFTNDGVTMEKIFDHIEFPLELDLSPFMSSNHDPEVSTRYHLYAFVEHIGIRATFGHYSSYVRSAPETWHNFDDSKVTRISEERVLSRPAYILFYAREGTPWFSSTFEQLKTVFEATPLHFSPVSVLDNSYESVDNSSKACNDSVGVSIPDVKWPDSCCQEPKEEVFHSAESSNNEDSSAMIDALGSPQSEKPFAETSQQTEPESCPTENKAYIDKSEKPFAETSQPKEPKPFADRASIDAPLLKVQNQDISPKRKAGERATLGGPKLKYQKPNSHQKRQGTFQIQRAHLQTKKQEESRKTKRPLFRSNVAASAPDPKYKNHALSYLNRAQTPRARKLANALSDSPTKKKKSSNMRRSIKL.

The segment covering 1–10 has biased composition (pro residues); the sequence is MAEFSDPPPS. The disordered stretch occupies residues 1–111; the sequence is MAEFSDPPPS…ISPVSNNNHL (111 aa). Polar residues-rich tracts occupy residues 11 to 31 and 38 to 53; these read NLSS…SSPT and VTNS…QIQA. Low complexity predominate over residues 55–69; it reads SPAKPDGSSSSPPDK. The region spanning 163–469 is the USP domain; it reads AGLYNSGNTC…PAYILFYARE (307 aa). C172 serves as the catalytic Nucleophile. H428 serves as the catalytic Proton acceptor. Residues 534-732 form a disordered region; sequence KEEVFHSAES…SSNMRRSIKL (199 aa). Low complexity predominate over residues 540–551; that stretch reads SAESSNNEDSSA. The segment covering 583–609 has biased composition (basic and acidic residues); it reads AYIDKSEKPFAETSQPKEPKPFADRAS. Positions 719–732 are enriched in basic residues; that stretch reads KKKKSSNMRRSIKL.

It belongs to the peptidase C19 family.

It catalyses the reaction Thiol-dependent hydrolysis of ester, thioester, amide, peptide and isopeptide bonds formed by the C-terminal Gly of ubiquitin (a 76-residue protein attached to proteins as an intracellular targeting signal).. Recognizes and hydrolyzes the peptide bond at the C-terminal Gly of ubiquitin. Involved in the processing of poly-ubiquitin precursors as well as that of ubiquitinated proteins. The chain is Ubiquitin carboxyl-terminal hydrolase 21 (UBP21) from Arabidopsis thaliana (Mouse-ear cress).